We begin with the raw amino-acid sequence, 968 residues long: Glycine dehydrogenase (decarboxylating) (968 aa).

K712 is modified (N6-(pyridoxal phosphate)lysine).

The protein belongs to the GcvP family. The glycine cleavage system is composed of four proteins: P, T, L and H. Pyridoxal 5'-phosphate is required as a cofactor.

The catalysed reaction is N(6)-[(R)-lipoyl]-L-lysyl-[glycine-cleavage complex H protein] + glycine + H(+) = N(6)-[(R)-S(8)-aminomethyldihydrolipoyl]-L-lysyl-[glycine-cleavage complex H protein] + CO2. Functionally, the glycine cleavage system catalyzes the degradation of glycine. The P protein binds the alpha-amino group of glycine through its pyridoxal phosphate cofactor; CO(2) is released and the remaining methylamine moiety is then transferred to the lipoamide cofactor of the H protein. In Prochlorococcus marinus (strain NATL1A), this protein is Glycine dehydrogenase (decarboxylating).